Consider the following 153-residue polypeptide: Histone H2B.8 (153 aa).

Basic and acidic residues-rich tracts occupy residues 1–28 (MAPKAEKKPAAKKPAEEEPAAEKAEKAP) and 36–53 (EKRLPAGKGEKGSGEGKK). The segment at 1–61 (MAPKAEKKPA…KKAGRKKAKK (61 aa)) is disordered. K7 and K37 each carry N6-acetyllysine. Residue K149 forms a Glycyl lysine isopeptide (Lys-Gly) (interchain with G-Cter in ubiquitin) linkage.

This sequence belongs to the histone H2B family. The nucleosome is a histone octamer containing two molecules each of H2A, H2B, H3 and H4 assembled in one H3-H4 heterotetramer and two H2A-H2B heterodimers. The octamer wraps approximately 147 bp of DNA. Post-translationally, can be acetylated to form H2BK6ac and H2BK33ac. In terms of processing, monoubiquitinated by BRE1 to form H2BK143ub1 and deubiquitinated by UBP26. Required for heterochromatic histone H3 di- and trimethylation at H3K4me. May give a specific tag for epigenetic transcriptional activation.

The protein localises to the nucleus. The protein resides in the chromosome. Functionally, core component of nucleosome. Nucleosomes wrap and compact DNA into chromatin, limiting DNA accessibility to the cellular machineries which require DNA as a template. Histones thereby play a central role in transcription regulation, DNA repair, DNA replication and chromosomal stability. DNA accessibility is regulated via a complex set of post-translational modifications of histones, also called histone code, and nucleosome remodeling. The chain is Histone H2B.8 (H2B.8) from Oryza sativa subsp. indica (Rice).